The following is a 309-amino-acid chain: Sporulation sigma-E factor-processing peptidase (309 aa).

5 helical membrane-spanning segments follow: residues 7–27 (VIWL…AFIL), 36–55 (LVGG…TPFS), 61–78 (PAGK…TFGF), 88–105 (LFSF…IIGA), and 130–147 (PISW…WFFS). Aspartate 183 is a catalytic residue.

This sequence belongs to the peptidase U4 family. As to quaternary structure, self-associates. Interacts with SigE. Interacts with SpoIIR.

The protein localises to the cell membrane. Its function is as follows. Probable aspartic protease that is responsible for the proteolytic cleavage of the RNA polymerase sigma E factor (SigE/spoIIGB) to yield the active peptide in the mother cell during sporulation. Responds to a signal from the forespore that is triggered by the extracellular signal protein SpoIIR. The protein is Sporulation sigma-E factor-processing peptidase (spoIIGA) of Bacillus subtilis (strain 168).